A 166-amino-acid chain; its full sequence is Ribosome maturation factor RimM (166 aa).

Residues 94–166 enclose the PRC barrel domain; sequence EGEYYLGKLI…IELKVLDLLK (73 aa).

Belongs to the RimM family. Binds ribosomal protein uS19.

Its subcellular location is the cytoplasm. In terms of biological role, an accessory protein needed during the final step in the assembly of 30S ribosomal subunit, possibly for assembly of the head region. Essential for efficient processing of 16S rRNA. May be needed both before and after RbfA during the maturation of 16S rRNA. It has affinity for free ribosomal 30S subunits but not for 70S ribosomes. The polypeptide is Ribosome maturation factor RimM (Borreliella burgdorferi (strain ATCC 35210 / DSM 4680 / CIP 102532 / B31) (Borrelia burgdorferi)).